Reading from the N-terminus, the 90-residue chain is Essential MCU regulator, mitochondrial (90 aa).

A helical membrane pass occupies residues 49 to 68; the sequence is GVLKLIFVSASSLYIGGLIA.

The protein belongs to the SMDT1/EMRE family.

It is found in the mitochondrion inner membrane. Its function is as follows. Essential regulatory subunit of the mitochondrial calcium uniporter (mcu-1) channel, a protein that mediates calcium uptake into mitochondria. This is Essential MCU regulator, mitochondrial from Caenorhabditis elegans.